A 399-amino-acid polypeptide reads, in one-letter code: Succinyl-diaminopimelate desuccinylase (399 aa).

H80 is a Zn(2+) binding site. Residue D82 is part of the active site. Residue D113 participates in Zn(2+) binding. The active-site Proton acceptor is the E147. The Zn(2+) site is built by E148, E176, and H366.

The protein belongs to the peptidase M20A family. DapE subfamily. In terms of assembly, homodimer. It depends on Zn(2+) as a cofactor. Co(2+) serves as cofactor.

The catalysed reaction is N-succinyl-(2S,6S)-2,6-diaminopimelate + H2O = (2S,6S)-2,6-diaminopimelate + succinate. It functions in the pathway amino-acid biosynthesis; L-lysine biosynthesis via DAP pathway; LL-2,6-diaminopimelate from (S)-tetrahydrodipicolinate (succinylase route): step 3/3. In terms of biological role, catalyzes the hydrolysis of N-succinyl-L,L-diaminopimelic acid (SDAP), forming succinate and LL-2,6-diaminopimelate (DAP), an intermediate involved in the bacterial biosynthesis of lysine and meso-diaminopimelic acid, an essential component of bacterial cell walls. In Colwellia psychrerythraea (strain 34H / ATCC BAA-681) (Vibrio psychroerythus), this protein is Succinyl-diaminopimelate desuccinylase.